Here is a 293-residue protein sequence, read N- to C-terminus: Ribonuclease HIII (293 aa).

Positions 78 to 293 (LPLIGTDEVG…TEKAKKRLER (216 aa)) constitute an RNase H type-2 domain. Residues Asp84, Glu85, and Asp187 each coordinate a divalent metal cation.

It belongs to the RNase HII family. RnhC subfamily. Requires Mn(2+) as cofactor. It depends on Mg(2+) as a cofactor.

Its subcellular location is the cytoplasm. It carries out the reaction Endonucleolytic cleavage to 5'-phosphomonoester.. In terms of biological role, endonuclease that specifically degrades the RNA of RNA-DNA hybrids. In Streptococcus pneumoniae (strain JJA), this protein is Ribonuclease HIII.